The sequence spans 61 residues: Large ribosomal subunit protein uL30 (61 aa).

The protein belongs to the universal ribosomal protein uL30 family. Part of the 50S ribosomal subunit.

This Oenococcus oeni (strain ATCC BAA-331 / PSU-1) protein is Large ribosomal subunit protein uL30.